Consider the following 93-residue polypeptide: Protein IDA-LIKE 4 (93 aa).

The first 35 residues, Met1–Asp35, serve as a signal peptide directing secretion.

As to expression, expressed in mainly in buds. Lower levels in roots. Detected at the base of pedicel, in the floral and funicule abscission zones, in vascular tissues, in guard cells of young seedlings and in hydathodes.

It is found in the secreted. The protein localises to the extracellular space. In terms of biological role, may be involved in floral abscission. This Arabidopsis thaliana (Mouse-ear cress) protein is Protein IDA-LIKE 4 (IDL4).